A 531-amino-acid polypeptide reads, in one-letter code: Probable bifunctional methylthioribulose-1-phosphate dehydratase/enolase-phosphatase E1 2 (531 aa).

The tract at residues methionine 1–aspartate 248 is methylthioribulose-1-phosphate dehydratase. Cysteine 120 contacts substrate. Positions 138 and 140 each coordinate Zn(2+). The active-site Proton donor/acceptor; for methylthioribulose-1-phosphate dehydratase activity is the glutamate 163. Histidine 213 provides a ligand contact to Zn(2+). The segment at isoleucine 292–isoleucine 531 is enolase-phosphatase E1. Mg(2+) contacts are provided by aspartate 295 and glutamate 297. Substrate-binding positions include serine 430–serine 431 and lysine 464. Aspartate 490 lines the Mg(2+) pocket.

It in the N-terminal section; belongs to the aldolase class II family. MtnB subfamily. In the C-terminal section; belongs to the HAD-like hydrolase superfamily. MasA/MtnC family. Zn(2+) serves as cofactor. Requires Mg(2+) as cofactor.

It catalyses the reaction 5-(methylsulfanyl)-D-ribulose 1-phosphate = 5-methylsulfanyl-2,3-dioxopentyl phosphate + H2O. The catalysed reaction is 5-methylsulfanyl-2,3-dioxopentyl phosphate + H2O = 1,2-dihydroxy-5-(methylsulfanyl)pent-1-en-3-one + phosphate. The protein operates within amino-acid biosynthesis; L-methionine biosynthesis via salvage pathway; L-methionine from S-methyl-5-thio-alpha-D-ribose 1-phosphate: step 2/6. Its pathway is amino-acid biosynthesis; L-methionine biosynthesis via salvage pathway; L-methionine from S-methyl-5-thio-alpha-D-ribose 1-phosphate: step 3/6. It functions in the pathway amino-acid biosynthesis; L-methionine biosynthesis via salvage pathway; L-methionine from S-methyl-5-thio-alpha-D-ribose 1-phosphate: step 4/6. In Vitis vinifera (Grape), this protein is Probable bifunctional methylthioribulose-1-phosphate dehydratase/enolase-phosphatase E1 2.